Here is a 396-residue protein sequence, read N- to C-terminus: Elongation factor Tu (396 aa).

The region spanning 10-206 (KPHCNIGTIG…AVDEFIPQPT (197 aa)) is the tr-type G domain. Residues 19–26 (GHVDHGKT) form a G1 region. 19-26 (GHVDHGKT) contributes to the GTP binding site. Thr26 provides a ligand contact to Mg(2+). The tract at residues 60 to 64 (GITIS) is G2. The segment at 81–84 (DCPG) is G3. GTP is bound by residues 81–85 (DCPGH) and 136–139 (NKVD). The tract at residues 136–139 (NKVD) is G4. The tract at residues 174–176 (SAL) is G5.

It belongs to the TRAFAC class translation factor GTPase superfamily. Classic translation factor GTPase family. EF-Tu/EF-1A subfamily. In terms of assembly, monomer.

Its subcellular location is the cytoplasm. The enzyme catalyses GTP + H2O = GDP + phosphate + H(+). Its function is as follows. GTP hydrolase that promotes the GTP-dependent binding of aminoacyl-tRNA to the A-site of ribosomes during protein biosynthesis. In Pelagibacter ubique (strain HTCC1062), this protein is Elongation factor Tu.